The chain runs to 467 residues: Na(+)/H(+) exchange regulatory cofactor-like protein nrfl-1 (467 aa).

PDZ domains follow at residues 12-94 and 143-225; these read RLCV…ISEE and LAEL…ASED. The interval 344–429 is disordered; that stretch reads MSSHTEVLPP…ASSTSGYDDD (86 aa). Residues 407–425 are compositionally biased toward polar residues; that stretch reads PSPLSNGSSHGYAASSTSG.

Interacts (via PDZ 2 domain) with aat-6 (via PDZ-binding motif); the interaction sequesters aat-6 to the apical cell membrane of intestinal cells. Phosphorylated. Expressed in the excretory canal and intestine. Expressed on the apical cell membrane of intestinal cells (at protein level).

The protein resides in the cell projection. The protein localises to the microvillus membrane. Its subcellular location is the apical cell membrane. In terms of biological role, scaffold protein that connects plasma membrane proteins with members of the ezrin/moesin/radixin family and thereby helps to link them to the actin cytoskeleton and to regulate their surface expression. Anchors the amino acid transporter protein aat-6 to the apical cell membrane of intestinal cells, particularly in older animals, in order to maintain amino acid homeostasis. May play a role in promoting fertility. This chain is Na(+)/H(+) exchange regulatory cofactor-like protein nrfl-1, found in Caenorhabditis elegans.